The following is a 162-amino-acid chain: uncharacterized protein (162 aa).

Pentapeptide repeat domains follow at residues 33-72 (ASLI…NMTE), 73-112 (VCLI…DLRK), and 113-152 (ANLS…YISD).

This is an uncharacterized protein from Synechocystis sp. (strain ATCC 27184 / PCC 6803 / Kazusa).